Reading from the N-terminus, the 371-residue chain is Alanine dehydrogenase (371 aa).

The substrate site is built by Arg-15 and Lys-74. The active-site Proton donor/acceptor is His-95. Residues Ser-133, 177–178 (QA), Asp-197, Ser-219, 238–239 (VL), 266–269 (IAID), Arg-279, and 298–301 (VANM) contribute to the NAD(+) site. The Proton donor/acceptor role is filled by Asp-269.

The protein belongs to the AlaDH/PNT family. Homohexamer. Trimer of dimer.

It catalyses the reaction L-alanine + NAD(+) + H2O = pyruvate + NH4(+) + NADH + H(+). Its pathway is amino-acid degradation; L-alanine degradation via dehydrogenase pathway; NH(3) and pyruvate from L-alanine: step 1/1. Functionally, catalyzes the reversible reductive amination of pyruvate to L-alanine. May play a role in cell wall synthesis as L-alanine is an important constituent of the peptidoglycan layer. This chain is Alanine dehydrogenase (ald), found in Staphylococcus saprophyticus subsp. saprophyticus (strain ATCC 15305 / DSM 20229 / NCIMB 8711 / NCTC 7292 / S-41).